The chain runs to 384 residues: Ferrochelatase, mitochondrial (384 aa).

A [2Fe-2S] cluster-binding site is contributed by C156. Active-site residues include H190 and N343. [2Fe-2S] cluster is bound by residues C363, C366, and C371.

Belongs to the ferrochelatase family. As to quaternary structure, homodimer. Homotetramer. The cofactor is [2Fe-2S] cluster.

Its subcellular location is the mitochondrion inner membrane. It catalyses the reaction heme b + 2 H(+) = protoporphyrin IX + Fe(2+). It participates in porphyrin-containing compound metabolism; protoheme biosynthesis; protoheme from protoporphyrin-IX: step 1/1. Its function is as follows. Catalyzes the ferrous insertion into protoporphyrin IX. Terminal enzyme in heme biosynthesis. Contains four conserved cysteines that function as cluster ligands and play a crucial role in maintaining protein structure. The protein is Ferrochelatase, mitochondrial of Drosophila melanogaster (Fruit fly).